Here is a 353-residue protein sequence, read N- to C-terminus: tRNA-specific 2-thiouridylase MnmA 2 (353 aa).

Residues 9–16 (AMSGGVDS) and Met35 contribute to the ATP site. Cys98 acts as the Nucleophile in catalysis. Cys98 and Cys194 are oxidised to a cystine. Position 122 (Gly122) interacts with ATP. Residues 144–146 (KDQ) form an interaction with tRNA region. Cys194 acts as the Cysteine persulfide intermediate in catalysis. The interval 300-301 (RY) is interaction with tRNA.

Belongs to the MnmA/TRMU family.

It is found in the cytoplasm. It carries out the reaction S-sulfanyl-L-cysteinyl-[protein] + uridine(34) in tRNA + AH2 + ATP = 2-thiouridine(34) in tRNA + L-cysteinyl-[protein] + A + AMP + diphosphate + H(+). Functionally, catalyzes the 2-thiolation of uridine at the wobble position (U34) of tRNA, leading to the formation of s(2)U34. In Clostridium botulinum (strain ATCC 19397 / Type A), this protein is tRNA-specific 2-thiouridylase MnmA 2.